Here is a 141-residue protein sequence, read N- to C-terminus: Putative antiporter subunit mnhB2 (141 aa).

The next 4 helical transmembrane spans lie at 10 to 30 (TVTK…FFAG), 35 to 55 (GGGF…FLAF), 70 to 90 (ILMI…TFFG), and 114 to 134 (ITLF…TVML).

This sequence belongs to the CPA3 antiporters (TC 2.A.63) subunit B family. In terms of assembly, may form a heterooligomeric complex that consists of seven subunits: mnhA2, mnhB2, mnhC2, mnhD2, mnhE2, mnhF2 and mnhG2.

Its subcellular location is the cell membrane. The chain is Putative antiporter subunit mnhB2 (mnhB2) from Staphylococcus aureus (strain MRSA252).